The primary structure comprises 233 residues: tRNA (guanine-N(1)-)-methyltransferase (233 aa).

Residues glycine 113 and 133–138 contribute to the S-adenosyl-L-methionine site; that span reads VGDYVL.

Belongs to the RNA methyltransferase TrmD family. Homodimer.

The protein resides in the cytoplasm. It carries out the reaction guanosine(37) in tRNA + S-adenosyl-L-methionine = N(1)-methylguanosine(37) in tRNA + S-adenosyl-L-homocysteine + H(+). Its function is as follows. Specifically methylates guanosine-37 in various tRNAs. This Rhizobium etli (strain ATCC 51251 / DSM 11541 / JCM 21823 / NBRC 15573 / CFN 42) protein is tRNA (guanine-N(1)-)-methyltransferase.